A 118-amino-acid chain; its full sequence is Group 1 truncated hemoglobin GlbN (118 aa).

Histidine 70 provides a ligand contact to heme.

The protein belongs to the truncated hemoglobin family. Group I subfamily. In terms of assembly, monomer. Heme is required as a cofactor.

It localises to the membrane. The chain is Group 1 truncated hemoglobin GlbN (glbN) from Nostoc sp. (strain MUN 8820).